We begin with the raw amino-acid sequence, 883 residues long: Alanine--tRNA ligase (883 aa).

Residues histidine 560, histidine 564, cysteine 665, and histidine 669 each coordinate Zn(2+).

This sequence belongs to the class-II aminoacyl-tRNA synthetase family. Requires Zn(2+) as cofactor.

It localises to the cytoplasm. It carries out the reaction tRNA(Ala) + L-alanine + ATP = L-alanyl-tRNA(Ala) + AMP + diphosphate. Functionally, catalyzes the attachment of alanine to tRNA(Ala) in a two-step reaction: alanine is first activated by ATP to form Ala-AMP and then transferred to the acceptor end of tRNA(Ala). Also edits incorrectly charged Ser-tRNA(Ala) and Gly-tRNA(Ala) via its editing domain. The sequence is that of Alanine--tRNA ligase from Mesomycoplasma hyopneumoniae (strain J / ATCC 25934 / NCTC 10110) (Mycoplasma hyopneumoniae).